A 152-amino-acid chain; its full sequence is UPF0225 protein YchJ (152 aa).

This sequence belongs to the UPF0225 family.

This Escherichia coli O127:H6 (strain E2348/69 / EPEC) protein is UPF0225 protein YchJ.